We begin with the raw amino-acid sequence, 381 residues long: Nitric oxide reductase FlRd-NAD(+) reductase (381 aa).

It belongs to the FAD-dependent oxidoreductase family. The cofactor is FAD.

It is found in the cytoplasm. The enzyme catalyses 2 reduced [nitric oxide reductase rubredoxin domain] + NAD(+) + H(+) = 2 oxidized [nitric oxide reductase rubredoxin domain] + NADH. It participates in nitrogen metabolism; nitric oxide reduction. One of at least two accessory proteins for anaerobic nitric oxide (NO) reductase. Reduces the rubredoxin moiety of NO reductase. The protein is Nitric oxide reductase FlRd-NAD(+) reductase of Aliivibrio fischeri (strain ATCC 700601 / ES114) (Vibrio fischeri).